We begin with the raw amino-acid sequence, 590 residues long: Muscarinic acetylcholine receptor M3 (590 aa).

Over 1–67 the chain is Extracellular; that stretch reads MTLHNNNTTS…DPLGGHTIWQ (67 aa). N-linked (GlcNAc...) asparagine glycans are attached at residues Asn6, Asn7, Asn15, Asn41, Asn48, and Asn53. The helical transmembrane segment at 68–91 threads the bilayer; that stretch reads VVFIAFLTGILALVTIIGNILVIV. Topologically, residues 92-104 are cytoplasmic; that stretch reads AFKVNKQLKTVNN. A helical transmembrane segment spans residues 105–130; that stretch reads YFLLSLACADLIIGVISMNLFTTYII. Residues 131 to 142 lie on the Extracellular side of the membrane; it reads MNRWALGNLACD. A disulfide bridge links Cys141 with Cys221. A helical transmembrane segment spans residues 143–164; that stretch reads LWLSIDYVASNASVMNLLVISF. The Cytoplasmic segment spans residues 165-184; that stretch reads DRYFSITRPLTYRAKRTTKR. A helical membrane pass occupies residues 185 to 206; sequence AGVMIGLAWVISFILWAPAILF. The Extracellular segment spans residues 207 to 229; sequence WQYFVGKRTVPPGECFIQFLSEP. The chain crosses the membrane as a helical span at residues 230-252; it reads TITFGTAIAAFYMPVTIMTILYW. The Cytoplasmic segment spans residues 253–491; the sequence is RIYKETEKRT…SLIKEKKAAQ (239 aa). A Basolateral sorting signal motif is present at residues 275 to 281; the sequence is AEAENFV. A disordered region spans residues 324–357; the sequence is AEQMDQDHSSSDSWNNNDAAASLENSASSDEEDI. A compositionally biased stretch (low complexity) spans 334–345; sequence SDSWNNNDAAAS. Ser385 is subject to Phosphoserine. A helical transmembrane segment spans residues 492–514; that stretch reads TLSAILLAFIITWTPYNIMVLVN. The Extracellular portion of the chain corresponds to 515-526; it reads TFCDSCIPKTYW. The cysteines at positions 517 and 520 are disulfide-linked. The helical transmembrane segment at 527–546 threads the bilayer; that stretch reads NLGYWLCYINSTVNPVCYAL. Topologically, residues 547-590 are cytoplasmic; that stretch reads CNKTFRTTFKMLLLCQCDKRKRRKQQYQQRQSVIFHKRVPEQAL.

The protein belongs to the G-protein coupled receptor 1 family. Muscarinic acetylcholine receptor subfamily. CHRM3 sub-subfamily. As to quaternary structure, homodimer; the dimers can form tetramers. Interacts with NALCN. Interacts with TMEM147.

It is found in the cell membrane. It localises to the postsynaptic cell membrane. The protein localises to the basolateral cell membrane. Its subcellular location is the endoplasmic reticulum membrane. Its function is as follows. The muscarinic acetylcholine receptor mediates various cellular responses, including inhibition of adenylate cyclase, breakdown of phosphoinositides and modulation of potassium channels through the action of G proteins. Primary transducing effect is Pi turnover. The polypeptide is Muscarinic acetylcholine receptor M3 (CHRM3) (Sus scrofa (Pig)).